A 431-amino-acid polypeptide reads, in one-letter code: Trigger factor (431 aa).

A PPIase FKBP-type domain is found at Glu160–Pro245.

It belongs to the FKBP-type PPIase family. Tig subfamily.

It localises to the cytoplasm. It catalyses the reaction [protein]-peptidylproline (omega=180) = [protein]-peptidylproline (omega=0). Its function is as follows. Involved in protein export. Acts as a chaperone by maintaining the newly synthesized protein in an open conformation. Functions as a peptidyl-prolyl cis-trans isomerase. The sequence is that of Trigger factor from Actinobacillus succinogenes (strain ATCC 55618 / DSM 22257 / CCUG 43843 / 130Z).